The chain runs to 339 residues: Dihydroorotase (339 aa).

Zn(2+)-binding residues include His12 and His14. Residues 14–16 (HVR) and Asn40 contribute to the substrate site. Zn(2+) is bound by residues Lys94, His133, His167, and Asp239. N6-carboxylysine is present on Lys94. His133 is a substrate binding site. Asp239 is an active-site residue. The substrate site is built by His243 and Ala255.

The protein belongs to the metallo-dependent hydrolases superfamily. DHOase family. Class II DHOase subfamily. As to quaternary structure, homodimer. Requires Zn(2+) as cofactor.

It catalyses the reaction (S)-dihydroorotate + H2O = N-carbamoyl-L-aspartate + H(+). It participates in pyrimidine metabolism; UMP biosynthesis via de novo pathway; (S)-dihydroorotate from bicarbonate: step 3/3. Catalyzes the reversible cyclization of carbamoyl aspartate to dihydroorotate. The chain is Dihydroorotase from Helicobacter pylori (strain G27).